The following is a 277-amino-acid chain: RsbT co-antagonist protein RsbRB (277 aa).

One can recognise an STAS domain in the interval S165–H276. At T186 the chain carries Phosphothreonine.

As to quaternary structure, interacts with RsbRA and RsbS in the stressosome. The stressosome probably also contains RsbRC and RsbRD. Phosphorylated by RsbT.

Functionally, one of 4 functionally non-identical RsbR paralogs, it functions in the environmental signaling branch of the general stress response. Its function is as follows. Negative regulator of sigma-B activity. Non-phosphorylated RsbS binds to RsbT, preventing its association with RsbU. Requires any one of RsbRA, RsbRB, RsbRC or RsbRD to sequester RsbT. When RsbS and the RsbR paralog(s) are phosphorylated, they release RsbT, which can then bind and activate RsbU. In Bacillus subtilis (strain 168), this protein is RsbT co-antagonist protein RsbRB (rsbRB).